We begin with the raw amino-acid sequence, 249 residues long: Uridylate kinase (249 aa).

21–24 provides a ligand contact to ATP; that stretch reads KLSG. G63 contributes to the UMP binding site. Residues G64 and R68 each contribute to the ATP site. Residues D84 and 145-152 each bind UMP; that span reads TGNPFVTT. 3 residues coordinate ATP: T172, Y178, and D181.

It belongs to the UMP kinase family. As to quaternary structure, homohexamer.

The protein localises to the cytoplasm. The enzyme catalyses UMP + ATP = UDP + ADP. Its pathway is pyrimidine metabolism; CTP biosynthesis via de novo pathway; UDP from UMP (UMPK route): step 1/1. Inhibited by UTP. In terms of biological role, catalyzes the reversible phosphorylation of UMP to UDP. The sequence is that of Uridylate kinase from Francisella tularensis subsp. tularensis (strain FSC 198).